Consider the following 393-residue polypeptide: Protein TsgA (393 aa).

Transmembrane regions (helical) follow at residues 11–31 (WISF…GMVM), 51–71 (FLNA…EIIP), 78–98 (FGFI…SLAL), 101–121 (AAMF…TFLI), 134–154 (LLFT…VAAF), 162–182 (WYWV…LTFG), 206–226 (IGVL…LGFI), 245–265 (ALVS…SFIL), 273–293 (ILTV…TGTQ), 298–318 (WFIL…ITLG), 332–352 (FILT…GPIV), and 361–381 (LLTA…LGFV).

Belongs to the major facilitator superfamily. TsgA family.

It localises to the cell inner membrane. The protein is Protein TsgA of Salmonella paratyphi B (strain ATCC BAA-1250 / SPB7).